The primary structure comprises 484 residues: Nuclear rim protein 1 (484 aa).

Ser3 bears the Phosphoserine mark. The next 2 membrane-spanning stretches (helical) occupy residues 145 to 165 (FTIFILLSLNLYVSCKFMFGY) and 237 to 257 (IPTNFIINLFVSFSPTAIVFL). Residues 416–457 (SSNENLEKGGAFLPNQDQNRPSKSLSPLRKTPLSARQKRFEG) form a disordered region. Ser417 is modified (phosphoserine). Positions 430 to 440 (NQDQNRPSKSL) are enriched in polar residues. Residue Ser474 is modified to Phosphoserine.

This sequence belongs to the NUR1 family. Interacts with CSM1.

Its subcellular location is the nucleus membrane. Its function is as follows. Member of a perinuclear network that controls recombination at multiple loci to maintain genome stability. Required for rDNA repeat stability. The sequence is that of Nuclear rim protein 1 (NUR1) from Saccharomyces cerevisiae (strain JAY291) (Baker's yeast).